The primary structure comprises 98 residues: MSLVYMNIMTAFTVSLTGLLMYRSHLMSSLLCLEGMMLALFVMATLTILNSHFTLASMMPIILLVFAACEAALGLSLLVMVSNTYGTDYVQNLNLLQC.

3 helical membrane passes run 1-21, 29-49, and 61-81; these read MSLV…GLLM, SLLC…LTIL, and IILL…LVMV.

The protein belongs to the complex I subunit 4L family. In terms of assembly, core subunit of respiratory chain NADH dehydrogenase (Complex I) which is composed of 45 different subunits.

The protein resides in the mitochondrion inner membrane. The catalysed reaction is a ubiquinone + NADH + 5 H(+)(in) = a ubiquinol + NAD(+) + 4 H(+)(out). Its function is as follows. Core subunit of the mitochondrial membrane respiratory chain NADH dehydrogenase (Complex I) which catalyzes electron transfer from NADH through the respiratory chain, using ubiquinone as an electron acceptor. Part of the enzyme membrane arm which is embedded in the lipid bilayer and involved in proton translocation. The sequence is that of NADH-ubiquinone oxidoreductase chain 4L (MT-ND4L) from Elaphodus cephalophus (Tufted deer).